Reading from the N-terminus, the 124-residue chain is Fluoride-specific ion channel FluC (124 aa).

The next 4 helical transmembrane spans lie at 1-21, 36-56, 66-86, and 94-114; these read MAYL…HFIN, TFFI…YLAF, LFLM…SLDA, and AVGL…AGLF. Na(+) is bound by residues Gly-74 and Thr-77.

This sequence belongs to the fluoride channel Fluc/FEX (TC 1.A.43) family.

It is found in the cell inner membrane. The catalysed reaction is fluoride(in) = fluoride(out). With respect to regulation, na(+) is not transported, but it plays an essential structural role and its presence is essential for fluoride channel function. In terms of biological role, fluoride-specific ion channel. Important for reducing fluoride concentration in the cell, thus reducing its toxicity. The sequence is that of Fluoride-specific ion channel FluC from Rhodopseudomonas palustris (strain ATCC BAA-98 / CGA009).